A 173-amino-acid polypeptide reads, in one-letter code: Nascent polypeptide-associated complex subunit alpha (173 aa).

Residues 21 to 85 form the NAC-A/B domain; it reads VVHAEKAQKL…VTVEDMAAQA (65 aa). The interval 89–117 is disordered; the sequence is NESQKQATETKEEAAITEESGDAQPADTA. Serine 122 carries the post-translational modification Phosphoserine. One can recognise a UBA domain in the interval 134-171; the sequence is VDAKDIELVMAQANVSRAKAVTALKENNSDVVNAIMSL.

Belongs to the NAC-alpha family. As to quaternary structure, part of the nascent polypeptide-associated complex (NAC), consisting of ucp15 and btf3. NAC associates with ribosomes via btf3.

It localises to the cytoplasm. Its subcellular location is the nucleus. Functionally, component of the nascent polypeptide-associated complex (NAC), a dynamic component of the ribosomal exit tunnel, protecting the emerging polypeptides from interaction with other cytoplasmic proteins to ensure appropriate nascent protein targeting. The NAC complex also promotes mitochondrial protein import by enhancing productive ribosome interactions with the outer mitochondrial membrane and blocks the inappropriate interaction of ribosomes translating non-secretory nascent polypeptides with translocation sites in the membrane of the endoplasmic reticulum. Ucp15 may also be involved in transcription regulation. The chain is Nascent polypeptide-associated complex subunit alpha (egd2) from Schizosaccharomyces pombe (strain 972 / ATCC 24843) (Fission yeast).